The primary structure comprises 291 residues: MQENLLEKQFLNHPLYTKIQELKALNLTCNFSLDDSVNLSTNSQAKDEILAITKELKPWRKGPFKIDDLFIDTEWQSFIKFNILKPFMNEISQKCVADIGCNNGYYMFKMLEFNPAKLIGFDPSIKYRLQFELINALAKTPIKYELLGVEDLPSYSLKFDVIFCLGVIYHRSDPVKMLKDLKAGLNKNGVVFLDTMYIEDEREIALVPNKTYSKIPNIYFVPSISALKNWCERAGFKEFEVLATKKTDENEQRKTEWIDSFSLENFLDPKDKNLTIEGYEAPKRVYIRIKI.

Residues K61, W75, K80, G100, 122–124 (DPS), 149–150 (VE), Y169, and R284 contribute to the carboxy-S-adenosyl-L-methionine site.

The protein belongs to the class I-like SAM-binding methyltransferase superfamily. CmoB family. In terms of assembly, homotetramer.

It carries out the reaction carboxy-S-adenosyl-L-methionine + 5-hydroxyuridine(34) in tRNA = 5-carboxymethoxyuridine(34) in tRNA + S-adenosyl-L-homocysteine + H(+). Catalyzes carboxymethyl transfer from carboxy-S-adenosyl-L-methionine (Cx-SAM) to 5-hydroxyuridine (ho5U) to form 5-carboxymethoxyuridine (cmo5U) at position 34 in tRNAs. The sequence is that of tRNA U34 carboxymethyltransferase from Campylobacter jejuni subsp. jejuni serotype O:23/36 (strain 81-176).